Reading from the N-terminus, the 445-residue chain is Tol-Pal system protein TolB (445 aa).

The signal sequence occupies residues 1 to 26; that stretch reads MLNRRNFIRTTSALAASTALPGYAFG.

It belongs to the TolB family. The Tol-Pal system is composed of five core proteins: the inner membrane proteins TolA, TolQ and TolR, the periplasmic protein TolB and the outer membrane protein Pal. They form a network linking the inner and outer membranes and the peptidoglycan layer.

It is found in the periplasm. Part of the Tol-Pal system, which plays a role in outer membrane invagination during cell division and is important for maintaining outer membrane integrity. The sequence is that of Tol-Pal system protein TolB from Jannaschia sp. (strain CCS1).